The primary structure comprises 675 residues: Envelope glycoprotein (675 aa).

Residues 1-34 form the signal peptide; it reads MACSTLPKSPKDKIDPRDLLIPLILFLSLKGARS. Positions 35–270 are receptor-binding domain (RBD); it reads AAPGSSPHQV…RYQNLGPRVP (236 aa). Topologically, residues 35 to 620 are extracellular; the sequence is AAPGSSPHQV…FNRSPWFTTL (586 aa). An N-linked (GlcNAc...) asparagine; by host glycan is attached at asparagine 46. 5 disulfide bridges follow: cysteine 80-cysteine 132, cysteine 106-cysteine 121, cysteine 107-cysteine 117, cysteine 155-cysteine 175, and cysteine 167-cysteine 180. Position 89 (histidine 89) interacts with Zn(2+). Aspartate 120 is a binding site for Zn(2+). N-linked (GlcNAc...) asparagine; by host glycosylation occurs at asparagine 202. Cysteine 212 and cysteine 218 form a disulfide bridge. The segment at 276–323 is disordered; sequence VLADQLSLPRPNPLPKPAKSPPASNSTPTLISPSPTPTQPPPAGTGDR. Residues 285–295 are compositionally biased toward pro residues; the sequence is RPNPLPKPAKS. The segment covering 296–308 has biased composition (low complexity); sequence PPASNSTPTLISP. The span at 309-318 shows a compositional bias: pro residues; it reads SPTPTQPPPA. Asparagine 336 carries an N-linked (GlcNAc...) asparagine; by host glycan. 6 disulfides stabilise this stretch: cysteine 346-cysteine 349, cysteine 346-cysteine 573, cysteine 376-cysteine 430, cysteine 395-cysteine 407, cysteine 437-cysteine 450, and cysteine 565-cysteine 572. Residues 346–349 carry the CXXC motif; sequence CWLC. Asparagine 368 and asparagine 375 each carry an N-linked (GlcNAc...) asparagine; by host glycan. N-linked (GlcNAc...) asparagine; by host glycans are attached at residues asparagine 408 and asparagine 444. Residues 482-502 are fusion peptide; sequence VSLTLALLLGGLTMGGIAAGV. Residues 513–547 adopt a coiled-coil conformation; the sequence is QQFQQLHAAVQDDLKEVEKSITNLEKSLTSLSEVV. Residues 548-564 form an immunosuppression region; that stretch reads LQNRRGLDLLFLKEGGL. Residues 565-573 carry the CX6CC motif; it reads CAALKEECC. A helical membrane pass occupies residues 621 to 641; that stretch reads ISTIMGPLIILLLILLFGPCI. Cysteine 640 carries S-palmitoyl cysteine; by host lipidation. The Cytoplasmic segment spans residues 642-675; sequence LNRLVQFVKDRISVVQALVLTQQYHQLKPLEYEP. Residues 665 to 668 carry the YXXL motif; contains endocytosis signal motif; sequence YHQL.

As to quaternary structure, the mature envelope protein (Env) consists of a trimer of SU-TM heterodimers attached by a labile interchain disulfide bond. Specific enzymatic cleavages in vivo yield mature proteins. Envelope glycoproteins are synthesized as an inactive precursor that is N-glycosylated and processed likely by host cell furin or by a furin-like protease in the Golgi to yield the mature SU and TM proteins. The cleavage site between SU and TM requires the minimal sequence [KR]-X-[KR]-R. The R-peptide is released from the C-terminus of the cytoplasmic tail of the TM protein upon particle formation as a result of proteolytic cleavage by the viral protease. Cleavage of this peptide is required for TM to become fusogenic. In terms of processing, the CXXC motif is highly conserved across a broad range of retroviral envelope proteins. It is thought to participate in the formation of a labile disulfide bond possibly with the CX6CC motif present in the transmembrane protein. Isomerization of the intersubunit disulfide bond to an SU intrachain disulfide bond is thought to occur upon receptor recognition in order to allow membrane fusion. Post-translationally, the transmembrane protein is palmitoylated. The R-peptide is palmitoylated.

It is found in the virion membrane. The protein resides in the host cell membrane. In terms of biological role, the surface protein (SU) attaches the virus to the host cell by binding to its receptor. This interaction triggers the refolding of the transmembrane protein (TM) and is thought to activate its fusogenic potential by unmasking its fusion peptide. Fusion occurs at the host cell plasma membrane. The transmembrane protein (TM) acts as a class I viral fusion protein. Under the current model, the protein has at least 3 conformational states: pre-fusion native state, pre-hairpin intermediate state, and post-fusion hairpin state. During viral and target cell membrane fusion, the coiled coil regions (heptad repeats) assume a trimer-of-hairpins structure, positioning the fusion peptide in close proximity to the C-terminal region of the ectodomain. The formation of this structure appears to drive apposition and subsequent fusion of viral and target cell membranes. Membranes fusion leads to delivery of the nucleocapsid into the cytoplasm. The chain is Envelope glycoprotein (env) from Mus musculus (Mouse).